The sequence spans 217 residues: Ribonuclease HII (217 aa).

In terms of domain architecture, RNase H type-2 spans 12–201 (DLVAGVDEVG…VRTAHEARAA (190 aa)). 3 residues coordinate a divalent metal cation: Asp-18, Glu-19, and Asp-110.

It belongs to the RNase HII family. Requires Mn(2+) as cofactor. Mg(2+) serves as cofactor.

It localises to the cytoplasm. The catalysed reaction is Endonucleolytic cleavage to 5'-phosphomonoester.. Its function is as follows. Endonuclease that specifically degrades the RNA of RNA-DNA hybrids. The sequence is that of Ribonuclease HII from Pseudomonas syringae pv. tomato (strain ATCC BAA-871 / DC3000).